Here is a 1873-residue protein sequence, read N- to C-terminus: Voltage-dependent L-type calcium channel subunit alpha-1S (1873 aa).

Residues 1 to 23 (MEPSSPQDEGLRKKQPKKPLPEV) are disordered. Over 1–51 (MEPSSPQDEGLRKKQPKKPLPEVLPRPPRALFCLTLQNPLRKACISIVEWK) the chain is Cytoplasmic. The stretch at 38-337 (NPLRKACISI…LVLGVLSGEF (300 aa)) is one I repeat. A helical membrane pass occupies residues 52 to 70 (PFETIILLTIFANCVALAV). Topologically, residues 71 to 85 (YLPMPEDDNNSLNLG) are extracellular. An N-linked (GlcNAc...) asparagine glycan is attached at Asn79. A helical membrane pass occupies residues 86–106 (LEKLEYFFLTVFSIEAAMKII). Residues 107-115 (AYGFLFHQD) are Cytoplasmic-facing. The chain crosses the membrane as a helical span at residues 116-136 (AYLRSGWNVLDFIIVFLGVFT). Over 137–160 (AILEQVNVIQSNTAPMSSKGAGLD) the chain is Extracellular. The helical transmembrane segment at 161–179 (VKALRAFRVLRPLRLVSGV) threads the bilayer. The Cytoplasmic segment spans residues 180-196 (PSLQVVLNSIFKAMLPL). Residues 197–218 (FHIALLVLFMVIIYAIIGLELF) form a helical membrane-spanning segment. Residues 219 to 279 (KGKMHKTCYY…HGITHFDNFG (61 aa)) lie on the Extracellular side of the membrane. Disulfide bonds link Cys226/Cys254 and Cys245/Cys261. N-linked (GlcNAc...) asparagine glycosylation is present at Asn257. The segment at residues 280–301 (FSMLTVYQCITMEGWTDVLYWV) is an intramembrane region (pore-forming). The short motif at 290 to 293 (TMEG) is the Selectivity filter of repeat I element. Glu292 contacts Ca(2+). Residues 302–309 (NDAIGNEW) lie on the Extracellular side of the membrane. A helical membrane pass occupies residues 310 to 330 (PWIYFVTLILLGSFFILNLVL). Over 331–432 (GVLSGEFTKE…WKCHDLVKSR (102 aa)) the chain is Cytoplasmic. The binding to the beta subunit stretch occupies residues 357–374 (QQLEEDLRGYMSWITQGE). A phosphoserine mark is found at Ser393 and Ser397. An II repeat occupies 418 to 664 (NRVFRWKCHD…VFLAIAVDNL (247 aa)). A helical membrane pass occupies residues 433–451 (VFYWLVILIVALNTLSIAS). The Extracellular segment spans residues 452 to 462 (EHHNQPLWLTH). Residues 463-483 (LQDIANRVLLSLFTIEMLLKM) form a helical membrane-spanning segment. Residues 484–494 (YGLGLRQYFMS) are Cytoplasmic-facing. A helical transmembrane segment spans residues 495–514 (IFNRFDCFVVCSGILELLLV). The Extracellular portion of the chain corresponds to 515 to 523 (ESGAMTPLG). The helical transmembrane segment at 524-542 (ISVLRCIRLLRLFKITKYW) threads the bilayer. Over 543 to 561 (TSLSNLVASLLNSIRSIAS) the chain is Cytoplasmic. Residues 562 to 581 (LLLLLFLFIIIFALLGMQLF) form a helical membrane-spanning segment. At 582 to 601 (GGRYDFEDTEVRRSNFDNFP) the chain is on the extracellular side. Positions 602–623 (QALISVFQVLTGEDWNSVMYNG) form an intramembrane region, pore-forming. Residues 612–615 (TGED) carry the Selectivity filter of repeat II motif. A Ca(2+)-binding site is contributed by Glu614. The Extracellular portion of the chain corresponds to 624–633 (IMAYGGPSYP). The helical transmembrane segment at 634–653 (GVLVCIYFIILFVCGNYILL) threads the bilayer. Topologically, residues 654–799 (NVFLAIAVDN…VLCHRIVNAT (146 aa)) are cytoplasmic. Disordered stretches follow at residues 673–717 (AQKA…IPTT) and 731–757 (EVKDPYPSADFPGDDEEDEPEIPVSPR). Ser687 bears the Phosphoserine; by PKA mark. Residues 690–711 (LPDKTEEEKSVMAKKLEQKPKG) show a composition bias toward basic and acidic residues. Positions 742 to 751 (PGDDEEDEPE) are enriched in acidic residues. The interval 747 to 760 (EDEPEIPVSPRPRP) is interaction with STAC, STAC2 and STAC3 (via SH3 domains). An III repeat occupies 786 to 1068 (NKVRVLCHRI…IFVGFVIVTF (283 aa)). Residues 800-818 (WFTNFILLFILLSSAALAA) form a helical membrane-spanning segment. Residues 819 to 830 (EDPIRAESVRNQ) are Extracellular-facing. The helical transmembrane segment at 831 to 850 (ILGYFDIAFTSVFTVEIVLK) threads the bilayer. Topologically, residues 851 to 866 (MTTYGAFLHKGSFCRN) are cytoplasmic. Residues 867 to 885 (YFNILDLLVVAVSLISMGL) form a helical membrane-spanning segment. Over 886 to 892 (ESSTISV) the chain is Extracellular. A helical transmembrane segment spans residues 893 to 911 (VKILRVLRVLRPLRAINRA). At 912 to 930 (KGLKHVVQCVFVAIRTIGN) the chain is on the cytoplasmic side. The helical transmembrane segment at 931-950 (IVLVTTLLQFMFACIGVQLF) threads the bilayer. The Extracellular portion of the chain corresponds to 951-1000 (KGKFFSCNDLSKMTEEECRGYYYVYKDGDPTQMELRPRQWIHNDFHFDNV). Cys957 and Cys968 are joined by a disulfide. The segment at 988 to 1077 (RQWIHNDFHF…FQEQGETEYK (90 aa)) is dihydropyridine binding. Residues 1001-1021 (LSAMMSLFTVSTFEGWPQLLY) constitute an intramembrane region (pore-forming). A Selectivity filter of repeat III motif is present at residues 1012–1015 (TFEG). A Ca(2+)-binding site is contributed by Glu1014. Over 1022 to 1038 (RAIDSNEEDMGPVYNNR) the chain is Extracellular. A helical membrane pass occupies residues 1039-1060 (VEMAIFFIIYIILIAFFMMNIF). At 1061–1118 (VGFVIVTFQEQGETEYKNCELDKNQRQCVQYALKARPLRCYIPKNPYQYQVWYVVTSS) the chain is on the cytoplasmic side. One copy of the IV repeat lies at 1105–1384 (NPYQYQVWYV…LFVAVIMDNF (280 aa)). A helical membrane pass occupies residues 1119–1140 (YFEYLMFALIMLNTICLGMQHY). At 1141–1148 (HQSEEMNH) the chain is on the extracellular side. The chain crosses the membrane as a helical span at residues 1149–1170 (ISDILNVAFTIIFTLEMILKLL). The Cytoplasmic portion of the chain corresponds to 1171–1180 (AFKARGYFGD). The helical transmembrane segment at 1181–1200 (PWNVFDFLIVIGSIIDVILS) threads the bilayer. Over 1201–1231 (EIDTFLASSGGLYCLGGGCGNVDPDESARIS) the chain is Extracellular. A helical membrane pass occupies residues 1232–1250 (SAFFRLFRVMRLIKLLSRA). The Cytoplasmic segment spans residues 1251–1268 (EGVRTLLWTFIKSFQALP). A helical membrane pass occupies residues 1269–1289 (YVALLIVMLFFIYAVIGMQMF). Residues 1290–1311 (GKIALVDGTQINRNNNFQTFPQ) are Extracellular-facing. Residues 1312-1330 (AVLLLFRCATGEAWQEILL) constitute an intramembrane region (pore-forming). The Selectivity filter of repeat IV motif lies at 1321–1324 (TGEA). The Extracellular segment spans residues 1331-1356 (ACSYGKLCDPESDYAPGEEYTCGTNF). Residues 1337-1403 (LCDPESDYAP…LGPHHLDEFK (67 aa)) are dihydropyridine binding. Residues Cys1338 and Cys1352 are joined by a disulfide bond. A phenylalkylamine binding region spans residues 1349-1391 (EYTCGTNFAYYYFISFYMLCAFLIINLFVAVIMDNFDYLTRDW). The helical transmembrane segment at 1357–1381 (AYYYFISFYMLCAFLIINLFVAVIM) threads the bilayer. Topologically, residues 1382–1873 (DNFDYLTRDW…SQETLIPPRP (492 aa)) are cytoplasmic. An interaction with calmodulin region spans residues 1522–1542 (KFYATFLIQEHFRKFMKRQEE). Ser1575 is modified (phosphoserine; by PKA and CAMK2). At Thr1579 the chain carries Phosphothreonine; by CK2. The residue at position 1617 (Ser1617) is a Phosphoserine; by PKA. Disordered regions lie at residues 1689 to 1782 (EFPG…RPAP) and 1841 to 1873 (GMASVPGSLSRRSSLGSLDQVQGSQETLIPPRP). The segment covering 1847-1858 (GSLSRRSSLGSL) has biased composition (low complexity).

Belongs to the calcium channel alpha-1 subunit (TC 1.A.1.11) family. CACNA1S subfamily. Component of a calcium channel complex consisting of a pore-forming alpha subunit (CACNA1S) and the ancillary subunits CACNB1 or CACNB2, CACNG1 and CACNA2D1. The channel complex contains alpha, beta, gamma and delta subunits in a 1:1:1:1 ratio, i.e. it contains either CACNB1 or CACNB2. CACNA1S channel activity is modulated by the auxiliary subunits (CACNB1 or CACNB2, CACNG1 and CACNA2D1). Interacts with DYSF and JSRP1. Interacts with RYR1. Interacts with STAC, STAC2 and STAC3 (via their SH3 domains). Interaction with STAC3 promotes expression at the cell membrane. Interaction with STAC2 promotes expression at the cell membrane, but with much lower efficiency than STAC3. Interaction with STAC1 leads to very low levels expression at the cell membrane, much less than the levels observed upon interaction with STAC3 and STAC2. Interacts with CALM. The alpha-1S subunit is found in two isoforms in the skeletal muscle: a minor form of 212 kDa containing the complete amino acid sequence, and a major form of 190 kDa derived from the full-length form by post-translational proteolysis close to Phe-1690. In terms of processing, phosphorylated. Phosphorylation by PKA activates the calcium channel. Both the minor and major forms are phosphorylated in vitro by PKA. Phosphorylation at Ser-1575 is involved in beta-adrenergic-mediated regulation of the channel. Detected in skeletal muscle T-tubules (at protein level).

The protein resides in the cell membrane. Its subcellular location is the sarcolemma. The protein localises to the T-tubule. It catalyses the reaction Ca(2+)(in) = Ca(2+)(out). Its activity is regulated as follows. Channel activity is blocked by dihydropyridines (DHP), phenylalkylamines, and by benzothiazepines. Its function is as follows. Pore-forming, alpha-1S subunit of the voltage-gated calcium channel that gives rise to L-type calcium currents in skeletal muscle. Calcium channels containing the alpha-1S subunit play an important role in excitation-contraction coupling in skeletal muscle via their interaction with RYR1, which triggers Ca(2+) release from the sarcplasmic reticulum and ultimately results in muscle contraction. Long-lasting (L-type) calcium channels belong to the 'high-voltage activated' (HVA) group. In Oryctolagus cuniculus (Rabbit), this protein is Voltage-dependent L-type calcium channel subunit alpha-1S (CACNA1S).